Reading from the N-terminus, the 492-residue chain is Glutamyl-tRNA(Gln) amidotransferase subunit A (492 aa).

Catalysis depends on charge relay system residues Lys78 and Ser158. Residue Ser182 is the Acyl-ester intermediate of the active site.

The protein belongs to the amidase family. GatA subfamily. As to quaternary structure, heterotrimer of A, B and C subunits.

The enzyme catalyses L-glutamyl-tRNA(Gln) + L-glutamine + ATP + H2O = L-glutaminyl-tRNA(Gln) + L-glutamate + ADP + phosphate + H(+). In terms of biological role, allows the formation of correctly charged Gln-tRNA(Gln) through the transamidation of misacylated Glu-tRNA(Gln) in organisms which lack glutaminyl-tRNA synthetase. The reaction takes place in the presence of glutamine and ATP through an activated gamma-phospho-Glu-tRNA(Gln). This is Glutamyl-tRNA(Gln) amidotransferase subunit A from Rhodopseudomonas palustris (strain BisA53).